A 252-amino-acid polypeptide reads, in one-letter code: MSSLKRIVWFPILAIAIQILSIHTVLSQSQNNAFLFHKCSDIEGSFTSKSLYESNLNNLFSQLSYKVPSTGFAASSTGNTPNNVNGLALCRGDASSSDCRSCLETAIPELRQRCPNNKAGIVWYDNCLVKYSSTNFFGKIDFENRFYLYNVKNVSDPSTFNSQTKALLTELTKKATTRDNQKLFATGEKNIGKNKLYGLVQCTRDLKSITCKACLNGIIGELPNCCDGKEGGRVVGGSCNFRYEIYPFVKTA.

An N-terminal signal peptide occupies residues 1–27; it reads MSSLKRIVWFPILAIAIQILSIHTVLS. 2 consecutive Gnk2-homologous domains span residues 34–136 and 142–248; these read FLFH…STNF and FENR…IYPF.

It belongs to the cysteine-rich repeat secretory protein family.

The protein localises to the secreted. The protein is Cysteine-rich repeat secretory protein 38 (CRRSP38) of Arabidopsis thaliana (Mouse-ear cress).